The following is a 363-amino-acid chain: Phosphoserine aminotransferase (363 aa).

Arg-42 provides a ligand contact to L-glutamate. Pyridoxal 5'-phosphate-binding residues include Trp-105, Thr-155, Asp-175, and Gln-198. Lys-199 carries the N6-(pyridoxal phosphate)lysine modification. 240–241 (NT) is a binding site for pyridoxal 5'-phosphate.

Belongs to the class-V pyridoxal-phosphate-dependent aminotransferase family. SerC subfamily. Homodimer. The cofactor is pyridoxal 5'-phosphate.

Its subcellular location is the cytoplasm. It carries out the reaction O-phospho-L-serine + 2-oxoglutarate = 3-phosphooxypyruvate + L-glutamate. The enzyme catalyses 4-(phosphooxy)-L-threonine + 2-oxoglutarate = (R)-3-hydroxy-2-oxo-4-phosphooxybutanoate + L-glutamate. Its pathway is amino-acid biosynthesis; L-serine biosynthesis; L-serine from 3-phospho-D-glycerate: step 2/3. It participates in cofactor biosynthesis; pyridoxine 5'-phosphate biosynthesis; pyridoxine 5'-phosphate from D-erythrose 4-phosphate: step 3/5. Functionally, catalyzes the reversible conversion of 3-phosphohydroxypyruvate to phosphoserine and of 3-hydroxy-2-oxo-4-phosphonooxybutanoate to phosphohydroxythreonine. The sequence is that of Phosphoserine aminotransferase from Janthinobacterium sp. (strain Marseille) (Minibacterium massiliensis).